The following is a 331-amino-acid chain: Homoserine O-succinyltransferase (331 aa).

The active-site Acyl-thioester intermediate is the C141. 2 residues coordinate substrate: K162 and S190. Catalysis depends on H233, which acts as the Proton acceptor. E235 is an active-site residue. Position 247 (R247) interacts with substrate.

Belongs to the MetA family.

Its subcellular location is the cytoplasm. It carries out the reaction L-homoserine + succinyl-CoA = O-succinyl-L-homoserine + CoA. The protein operates within amino-acid biosynthesis; L-methionine biosynthesis via de novo pathway; O-succinyl-L-homoserine from L-homoserine: step 1/1. Its function is as follows. Transfers a succinyl group from succinyl-CoA to L-homoserine, forming succinyl-L-homoserine. The polypeptide is Homoserine O-succinyltransferase (Methylorubrum extorquens (strain DSM 6343 / CIP 106787 / DM4) (Methylobacterium extorquens)).